Here is a 309-residue protein sequence, read N- to C-terminus: Enoyl-CoA hydratase 2, peroxisomal (309 aa).

Substrate contacts are provided by residues 95-96, Lys-124, 208-213, Gly-231, and Phe-261; these read HG and DYNPLH. The MaoC-like domain occupies 183 to 295; the sequence is PQRQPLTVCE…TKVKERNKTV (113 aa). A Microbody targeting signal motif is present at residues 307–309; that stretch reads SSL.

In terms of tissue distribution, ubiquitous.

The protein localises to the peroxisome. The catalysed reaction is a (3R)-3-hydroxyacyl-CoA = a (2E)-enoyl-CoA + H2O. It functions in the pathway lipid metabolism; fatty acid beta-oxidation. In terms of biological role, bidirectional monofunctional enoyl-CoA hydratase 2 involved in the degradation of even cis-unsaturated fatty acids. Devoid of 3-hydroxyacyl-CoA dehydrogenase activity. The polypeptide is Enoyl-CoA hydratase 2, peroxisomal (ECH2) (Arabidopsis thaliana (Mouse-ear cress)).